The sequence spans 466 residues: Cysteine--tRNA ligase (466 aa).

Position 29 (Cys29) interacts with Zn(2+). Residues 31–41 carry the 'HIGH' region motif; that stretch reads ATVQAAPHIGH. Cys208, His233, and Glu237 together coordinate Zn(2+). Positions 264–268 match the 'KMSKS' region motif; that stretch reads KMSKS. Position 267 (Lys267) interacts with ATP.

Belongs to the class-I aminoacyl-tRNA synthetase family. In terms of assembly, monomer. The cofactor is Zn(2+).

It localises to the cytoplasm. It catalyses the reaction tRNA(Cys) + L-cysteine + ATP = L-cysteinyl-tRNA(Cys) + AMP + diphosphate. This chain is Cysteine--tRNA ligase, found in Streptomyces avermitilis (strain ATCC 31267 / DSM 46492 / JCM 5070 / NBRC 14893 / NCIMB 12804 / NRRL 8165 / MA-4680).